The following is a 323-amino-acid chain: Peroxidase 16 (323 aa).

The N-terminal stretch at 1-23 (MKNQSSFSIVALLLIFFSSSVFA) is a signal peptide. 4 disulfide bridges follow: C34–C113, C67–C72, C119–C319, and C198–C230. H65 functions as the Proton acceptor in the catalytic mechanism. Ca(2+) contacts are provided by D66, V69, G71, D73, and S75. P161 contributes to the substrate binding site. Residue H191 participates in heme b binding. Residue T192 participates in Ca(2+) binding. Ca(2+) contacts are provided by D243, S246, and D251.

It belongs to the peroxidase family. Classical plant (class III) peroxidase subfamily. Heme b is required as a cofactor. The cofactor is Ca(2+). Expressed in the whole plant, but preferentially in roots and leaves.

It is found in the secreted. It carries out the reaction 2 a phenolic donor + H2O2 = 2 a phenolic radical donor + 2 H2O. Its function is as follows. Removal of H(2)O(2), oxidation of toxic reductants, biosynthesis and degradation of lignin, suberization, auxin catabolism, response to environmental stresses such as wounding, pathogen attack and oxidative stress. These functions might be dependent on each isozyme/isoform in each plant tissue. The sequence is that of Peroxidase 16 (PER16) from Arabidopsis thaliana (Mouse-ear cress).